The chain runs to 87 residues: Large ribosomal subunit protein bL27 (87 aa).

This sequence belongs to the bacterial ribosomal protein bL27 family.

This is Large ribosomal subunit protein bL27 from Dechloromonas aromatica (strain RCB).